A 450-amino-acid polypeptide reads, in one-letter code: Protein tailless (450 aa).

The segment at residues 31–108 is a DNA-binding region (nuclear receptor); that stretch reads HVPCKVCRDH…VGMNKDAVQH (78 aa). 2 NR C4-type zinc fingers span residues 34–54 and 70–96; these read CKVCRDHSSGKHYGIYACDGC and CKSQKQGLCVVDKTHRNQCRACRLRKC. The NR LBD domain maps to 187 to 448; the sequence is VPRVPHHPVH…RLISDMYSQR (262 aa).

It belongs to the nuclear hormone receptor family. NR2 subfamily. In terms of assembly, monomer.

The protein resides in the nucleus. Its function is as follows. Orphan receptor that binds DNA as a monomer to hormone response elements (HRE) containing an extended core motif half-site sequence 5'-AAGTCA-3' in which the 5' flanking nucleotides participate in determining receptor specificity. This receptor binds to the consensus sequence [AG][AG]AAGTCAA. Plays a key role in the establishment of non-metameric domains at the anterior and posterior poles of the embryo. It may also play a role in the nervous system. The maternal terminal pathway activates the tll gene in the termini; TLL activity then represses segmentation and activates terminal-specific genes in these domains. Involved in the regulation of early eye development. In the embryonic visual system anlage drives cells to optic lobe as opposed to Bolwig's organ fate. The protein is Protein tailless (tll) of Drosophila virilis (Fruit fly).